The following is a 37-amino-acid chain: Large ribosomal subunit protein bL36 (37 aa).

This sequence belongs to the bacterial ribosomal protein bL36 family.

This Clostridium kluyveri (strain NBRC 12016) protein is Large ribosomal subunit protein bL36.